The primary structure comprises 230 residues: Ribonuclease 3 (230 aa).

One can recognise an RNase III domain in the interval 10-133; it reads DPRLLSRIGY…IIGAIYLDSS (124 aa). A Mg(2+)-binding site is contributed by Glu-46. Asp-50 is a catalytic residue. Mg(2+) contacts are provided by Asp-119 and Glu-122. Glu-122 is an active-site residue. Positions 161-230 constitute a DRBM domain; the sequence is DPKSRLQEYL…AAEILKLLEQ (70 aa).

This sequence belongs to the ribonuclease III family. Homodimer. It depends on Mg(2+) as a cofactor.

Its subcellular location is the cytoplasm. The enzyme catalyses Endonucleolytic cleavage to 5'-phosphomonoester.. Its function is as follows. Digests double-stranded RNA. Involved in the processing of primary rRNA transcript to yield the immediate precursors to the large and small rRNAs (23S and 16S). Processes some mRNAs, and tRNAs when they are encoded in the rRNA operon. Processes pre-crRNA and tracrRNA of type II CRISPR loci if present in the organism. The sequence is that of Ribonuclease 3 from Acinetobacter baumannii (strain SDF).